Here is a 502-residue protein sequence, read N- to C-terminus: Ubiquitin-associated protein 1 (502 aa).

The interval 1 to 95 is interaction with ESCRT-I; sequence MASKKLGADF…AEAKVNSKSG (95 aa). The UMA domain maps to 17 to 63; it reads LDDVPFKTGDKFKTPAKVGLPIGFSLPDCLQVVREVQYDFSLEKKTI. The span at 86–100 shows a compositional bias: basic and acidic residues; that stretch reads AEAKVNSKSGPEGDS. The tract at residues 86 to 117 is disordered; sequence AEAKVNSKSGPEGDSKMSFSKTHSTATMPPPI. Residues 102–112 show a composition bias toward polar residues; it reads MSFSKTHSTAT. A phosphoserine mark is found at S146, S205, and S289. An interaction with PTPN23 region spans residues 260-290; it reads VSNIKSLSFPKLDSDDSNQKTAKLASTFHST. UBA domains are found at residues 389-430 and 451-498; these read SPSE…LFAH and QCSE…LMAR.

In terms of assembly, component of an ESCRT-I complex (endosomal sorting complex required for transport I) which consists of TSG101, VPS28, VPS37A and UBAP1 in a 1:1:1:1 stoichiometry. Interacts with PTPN23. Interacts (via UBA domains) with ubiquitinated proteins. In terms of tissue distribution, ubiquitous. Highly expressed in heart, brain, placenta, lung, liver, skeletal muscle and pancreas.

The protein localises to the cytoplasm. Its subcellular location is the cytosol. It is found in the endosome. Component of the ESCRT-I complex, a regulator of vesicular trafficking process. Binds to ubiquitinated cargo proteins and is required for the sorting of endocytic ubiquitinated cargos into multivesicular bodies (MVBs). Plays a role in the proteasomal degradation of ubiquitinated cell-surface proteins, such as EGFR and BST2. The sequence is that of Ubiquitin-associated protein 1 from Homo sapiens (Human).